The primary structure comprises 563 residues: GTPase Obg (563 aa).

The region spanning 2–168 is the Obg domain; it reads SDFVDRVTVH…RDVILELKSI (167 aa). In terms of domain architecture, OBG-type G spans 169–349; it reads ADVALVGFPS…LNFALSALVH (181 aa). GTP-binding positions include 175-182, 200-204, 221-224, 301-304, and 330-332; these read GFPSAGKS, FTTLV, DVPG, NKID, and STA. Mg(2+)-binding residues include Ser182 and Thr202. Residues 383–469 form the OCT domain; it reads DEGGSALEFT…ARMVEFDWDP (87 aa). 2 disordered regions span residues 478–509 and 528–563; these read LDGS…ERRA and ERKA…ETEE. The segment covering 486-509 has biased composition (basic and acidic residues); the sequence is RGKDLRLEEQDPRTHRRSNAERRA.

It belongs to the TRAFAC class OBG-HflX-like GTPase superfamily. OBG GTPase family. As to quaternary structure, monomer. Mg(2+) serves as cofactor.

Its subcellular location is the cytoplasm. An essential GTPase which binds GTP, GDP and possibly (p)ppGpp with moderate affinity, with high nucleotide exchange rates and a fairly low GTP hydrolysis rate. Plays a role in control of the cell cycle, stress response, ribosome biogenesis and in those bacteria that undergo differentiation, in morphogenesis control. The chain is GTPase Obg from Bifidobacterium longum subsp. infantis (strain ATCC 15697 / DSM 20088 / JCM 1222 / NCTC 11817 / S12).